A 313-amino-acid chain; its full sequence is tRNA dimethylallyltransferase (313 aa).

Residue 11–18 coordinates ATP; the sequence is GPTAGGKT. 13 to 18 is a binding site for substrate; sequence TAGGKT. 3 interaction with substrate tRNA regions span residues 36 to 39, 160 to 164, and 243 to 248; these read DSAL, QRIGR, and RCVGYR.

Belongs to the IPP transferase family. In terms of assembly, monomer. It depends on Mg(2+) as a cofactor.

It carries out the reaction adenosine(37) in tRNA + dimethylallyl diphosphate = N(6)-dimethylallyladenosine(37) in tRNA + diphosphate. Catalyzes the transfer of a dimethylallyl group onto the adenine at position 37 in tRNAs that read codons beginning with uridine, leading to the formation of N6-(dimethylallyl)adenosine (i(6)A). In Neisseria meningitidis serogroup C / serotype 2a (strain ATCC 700532 / DSM 15464 / FAM18), this protein is tRNA dimethylallyltransferase.